The chain runs to 301 residues: Glycine--tRNA ligase alpha subunit (301 aa).

This sequence belongs to the class-II aminoacyl-tRNA synthetase family. Tetramer of two alpha and two beta subunits.

The protein localises to the cytoplasm. It catalyses the reaction tRNA(Gly) + glycine + ATP = glycyl-tRNA(Gly) + AMP + diphosphate. This chain is Glycine--tRNA ligase alpha subunit, found in Glaesserella parasuis serovar 5 (strain SH0165) (Haemophilus parasuis).